The primary structure comprises 105 residues: UPF0473 protein SAG2089 (105 aa).

The protein belongs to the UPF0473 family.

The polypeptide is UPF0473 protein SAG2089 (Streptococcus agalactiae serotype V (strain ATCC BAA-611 / 2603 V/R)).